A 98-amino-acid polypeptide reads, in one-letter code: Ferredoxin-3 (98 aa).

4Fe-4S ferredoxin-type domains lie at 18 to 47 and 66 to 95; these read FVEA…LQAL and VMSI…HSPL. [4Fe-4S] cluster is bound by residues cysteine 27, cysteine 30, cysteine 33, cysteine 37, cysteine 75, cysteine 78, cysteine 81, and cysteine 85.

In terms of assembly, homodimer. The cofactor is [4Fe-4S] cluster.

Its function is as follows. Ferredoxins are iron-sulfur proteins that transfer electrons in a wide variety of metabolic reactions. The protein is Ferredoxin-3 (fdxB) of Trichormus variabilis (strain ATCC 29413 / PCC 7937) (Anabaena variabilis).